The chain runs to 266 residues: Non-structural maintenance of chromosomes element 1 homolog (266 aa).

An interaction with NSMCE3 region spans residues 1–102 (MQGSTRRAGA…SVSKMATDFA (102 aa)). The RING-type; atypical zinc-finger motif lies at 191–232 (CNICHSLLIQGQSCETCGIRMHLPCVAKYFQSTAEPRCPHCN). The tract at residues 246–266 (EKEREAGISKSSRKSLRTRQH) is disordered. Residues 256–266 (SSRKSLRTRQH) show a composition bias toward basic residues.

It belongs to the NSE1 family. In terms of assembly, component of the SMC5-SMC6 complex which consists at least of SMC5, SMC6, NSMCE2, NSMCE1, NSMCE4A or EID3 and NSMCE3. NSMCE1, NSMCE4A or EID3 and NSMCE3 probably form a subcomplex that bridges the head domains of the SMC5-SMC6 heterodimer. Interacts with NSMCE3. Post-translationally, ubiquitinated.

The protein resides in the nucleus. Its subcellular location is the chromosome. It localises to the telomere. It catalyses the reaction S-ubiquitinyl-[E2 ubiquitin-conjugating enzyme]-L-cysteine + [acceptor protein]-L-lysine = [E2 ubiquitin-conjugating enzyme]-L-cysteine + N(6)-ubiquitinyl-[acceptor protein]-L-lysine.. Its function is as follows. RING-type zinc finger-containing E3 ubiquitin ligase that assembles with melanoma antigen protein (MAGE) to catalyze the direct transfer of ubiquitin from E2 ubiquitin-conjugating enzyme to a specific substrate. Within MAGE-RING ubiquitin ligase complex, MAGE stimulates and specifies ubiquitin ligase activity likely through recruitment and/or stabilization of the E2 ubiquitin-conjugating enzyme at the E3:substrate complex. Involved in maintenance of genome integrity, DNA damage response and DNA repair. NSMCE3/MAGEG1 and NSMCE1 ubiquitin ligase are components of SMC5-SMC6 complex and may positively regulate homologous recombination-mediated DNA repair. In Rattus norvegicus (Rat), this protein is Non-structural maintenance of chromosomes element 1 homolog (Nsmce1).